The sequence spans 277 residues: MTAQSQNIVETPSRVRAHALGVNAPELAKYQDEPAQMRSGAVGKSGYLKLRFAKREHCSILAEMERRVPSLVQKALYWDEEIPELPCVTMISTSGCILQGDRLATDVHVEAGACAHVTTQSATKVHMMNANYASQIQNFIVEEGGYLEFMPDPLIPHRNSRFITDTTISIHPTATAIYSEVLMSGRKYHHADERFGFDVYSSRVAAQNLAGKELFVEKYVLEPKVESLDAVGVMQTFDAFGNVILLTPKEHHDRILARVPAHFDIKGGDCQRRDAST.

This sequence belongs to the UreD family. UreD, UreF and UreG form a complex that acts as a GTP-hydrolysis-dependent molecular chaperone, activating the urease apoprotein by helping to assemble the nickel containing metallocenter of UreC. The UreE protein probably delivers the nickel.

It localises to the cytoplasm. Required for maturation of urease via the functional incorporation of the urease nickel metallocenter. The sequence is that of Urease accessory protein UreD from Yersinia pestis bv. Antiqua (strain Antiqua).